Consider the following 117-residue polypeptide: Large ribosomal subunit protein uL18 (117 aa).

It belongs to the universal ribosomal protein uL18 family. In terms of assembly, part of the 50S ribosomal subunit; part of the 5S rRNA/L5/L18/L25 subcomplex. Contacts the 5S and 23S rRNAs.

This is one of the proteins that bind and probably mediate the attachment of the 5S RNA into the large ribosomal subunit, where it forms part of the central protuberance. The protein is Large ribosomal subunit protein uL18 of Thioalkalivibrio sulfidiphilus (strain HL-EbGR7).